A 294-amino-acid polypeptide reads, in one-letter code: Acetylglutamate kinase (294 aa).

Substrate contacts are provided by residues glycine 47 to glycine 48, arginine 69, and asparagine 168.

Belongs to the acetylglutamate kinase family. ArgB subfamily.

It localises to the cytoplasm. It carries out the reaction N-acetyl-L-glutamate + ATP = N-acetyl-L-glutamyl 5-phosphate + ADP. The protein operates within amino-acid biosynthesis; L-arginine biosynthesis; N(2)-acetyl-L-ornithine from L-glutamate: step 2/4. In terms of biological role, catalyzes the ATP-dependent phosphorylation of N-acetyl-L-glutamate. The polypeptide is Acetylglutamate kinase (Corynebacterium glutamicum (strain ATCC 13032 / DSM 20300 / JCM 1318 / BCRC 11384 / CCUG 27702 / LMG 3730 / NBRC 12168 / NCIMB 10025 / NRRL B-2784 / 534)).